A 228-amino-acid chain; its full sequence is Lipoprotein-releasing system ATP-binding protein LolD (228 aa).

The ABC transporter domain maps to 5 to 228 (LRCHQVCKTY…DGLLTDITGA (224 aa)). 41–48 (GSSGSGKS) is a binding site for ATP.

It belongs to the ABC transporter superfamily. Lipoprotein translocase (TC 3.A.1.125) family. In terms of assembly, the complex is composed of two ATP-binding proteins (LolD) and two transmembrane proteins (LolC and LolE).

It is found in the cell inner membrane. Functionally, part of the ABC transporter complex LolCDE involved in the translocation of mature outer membrane-directed lipoproteins, from the inner membrane to the periplasmic chaperone, LolA. Responsible for the formation of the LolA-lipoprotein complex in an ATP-dependent manner. This is Lipoprotein-releasing system ATP-binding protein LolD from Vibrio cholerae serotype O1 (strain ATCC 39315 / El Tor Inaba N16961).